Consider the following 205-residue polypeptide: Holliday junction branch migration complex subunit RuvA (205 aa).

The interval 1-64 (MIGRLRGIIL…EDAQLLFGFN (64 aa)) is domain I. The domain II stretch occupies residues 65–142 (DKQERALFRE…KGLSGDLFNP (78 aa)). The tract at residues 143-156 (VSDIPLASPASAES) is flexible linker. The interval 157 to 205 (RASDPEAEAAAALVALGYKPQEASRMISKIARPEADCETLIRDALRAAL) is domain III.

It belongs to the RuvA family. As to quaternary structure, homotetramer. Forms an RuvA(8)-RuvB(12)-Holliday junction (HJ) complex. HJ DNA is sandwiched between 2 RuvA tetramers; dsDNA enters through RuvA and exits via RuvB. An RuvB hexamer assembles on each DNA strand where it exits the tetramer. Each RuvB hexamer is contacted by two RuvA subunits (via domain III) on 2 adjacent RuvB subunits; this complex drives branch migration. In the full resolvosome a probable DNA-RuvA(4)-RuvB(12)-RuvC(2) complex forms which resolves the HJ.

The protein localises to the cytoplasm. Functionally, the RuvA-RuvB-RuvC complex processes Holliday junction (HJ) DNA during genetic recombination and DNA repair, while the RuvA-RuvB complex plays an important role in the rescue of blocked DNA replication forks via replication fork reversal (RFR). RuvA specifically binds to HJ cruciform DNA, conferring on it an open structure. The RuvB hexamer acts as an ATP-dependent pump, pulling dsDNA into and through the RuvAB complex. HJ branch migration allows RuvC to scan DNA until it finds its consensus sequence, where it cleaves and resolves the cruciform DNA. The protein is Holliday junction branch migration complex subunit RuvA of Pectobacterium carotovorum subsp. carotovorum (strain PC1).